The primary structure comprises 184 residues: Ras-related protein O-Krev (184 aa).

Position 10–17 (10–17) interacts with GTP; that stretch reads GSGGVGKS. Positions 32 to 40 match the Effector region motif; sequence YDPTIEDSY. Residues 57–61 and 116–119 contribute to the GTP site; these read DTAGT and NKCD. The residue at position 181 (Cys181) is a Cysteine methyl ester. The S-geranylgeranyl cysteine moiety is linked to residue Cys181. Residues 182-184 constitute a propeptide, removed in mature form; that stretch reads TLL.

Belongs to the small GTPase superfamily. Ras family.

The protein localises to the cell membrane. The catalysed reaction is GTP + H2O = GDP + phosphate + H(+). This chain is Ras-related protein O-Krev, found in Diplobatis ommata (Ocellated electric ray).